A 203-amino-acid polypeptide reads, in one-letter code: Large ribosomal subunit protein bL25 (203 aa).

Belongs to the bacterial ribosomal protein bL25 family. CTC subfamily. Part of the 50S ribosomal subunit; part of the 5S rRNA/L5/L18/L25 subcomplex. Contacts the 5S rRNA. Binds to the 5S rRNA independently of L5 and L18.

In terms of biological role, this is one of the proteins that binds to the 5S RNA in the ribosome where it forms part of the central protuberance. In Cellvibrio japonicus (strain Ueda107) (Pseudomonas fluorescens subsp. cellulosa), this protein is Large ribosomal subunit protein bL25.